A 300-amino-acid chain; its full sequence is Putative lysophosphatidic acid:oleoyl-CoA acyltransferase (300 aa).

The helical transmembrane segment at 32-52 (WILIVVVMILRVPLCIISVTL) threads the bilayer. The short motif at 115 to 120 (HSSPLD) is the HXXXXD motif element.

The protein belongs to the 1-acyl-sn-glycerol-3-phosphate acyltransferase family.

Its subcellular location is the lipid droplet. It localises to the endoplasmic reticulum membrane. It is found in the golgi apparatus membrane. The enzyme catalyses a 1-acyl-sn-glycero-3-phosphate + an acyl-CoA = a 1,2-diacyl-sn-glycero-3-phosphate + CoA. Acyl-CoA-dependent lysophosphatidic acid acyltransferase with preference for oleoyl-CoA. Involved in triacylglyceride homeostasis and lipid droplet formation. Involved in vacuolar protein sorting. The sequence is that of Putative lysophosphatidic acid:oleoyl-CoA acyltransferase (vps66) from Schizosaccharomyces pombe (strain 972 / ATCC 24843) (Fission yeast).